Here is a 574-residue protein sequence, read N- to C-terminus: Septation ring formation regulator EzrA (574 aa).

The Extracellular segment spans residues 1–7 (MSNGLII). A helical transmembrane segment spans residues 8–26 (LIIVIAVALILAYVAAVVL). At 27–574 (RKRNETLLDS…YEKTRENIRF (548 aa)) the chain is on the cytoplasmic side. 3 coiled-coil regions span residues 104 to 141 (LKAK…EAKN), 267 to 424 (NITQ…QKVN), and 456 to 524 (ASDH…SIQE).

This sequence belongs to the EzrA family.

Its subcellular location is the cell membrane. Negative regulator of FtsZ ring formation; modulates the frequency and position of FtsZ ring formation. Inhibits FtsZ ring formation at polar sites. Interacts either with FtsZ or with one of its binding partners to promote depolymerization. The protein is Septation ring formation regulator EzrA of Streptococcus gordonii (strain Challis / ATCC 35105 / BCRC 15272 / CH1 / DL1 / V288).